A 536-amino-acid polypeptide reads, in one-letter code: MAKQIEFDEKARRALERGVDKLADAVKVTLGPRGRHVVLAKAFGGPTVTNDGVTIARDIDLEDPFENLGAQLVKSVATKTNDVAGDGTTTATVLAQALVRGGLKNVAAGANPIAVGSGIAKAADAVSEALLAAATPVSGEQAIAQVATVSSRDEEIGEMVGKALTTVGKDGVVTVEESSTLQTELVVTEGVQFDKGYLSPYFITDTDTQEAVLEDAFVLLHREKISSLPDLLPLLEKIAEAGKPVLIVAEDVEGEALSTLVVNSIRKTLKAVAVKAPFFGDRRKAFLDDLAVVTAGTVVNPDLGITLREAGIDVLGKARRVVVTKDETTIIDGAGTAEDIAARAAQLRREIEATDSDWDREKLEERLAKLAGGVAVIKVGAATETALKERKYRVEDAVSAAKAAVDEGIVPGGGTALVQAATKLVELRDSLSGDEAVGVEVVRKALEAPLFWIASNAGLDGAVVVSKVAEGKEGFNAATLSYGDLLTDGVVDPVKVTRSAVVNAASVARMVLTTESAVVDKPAEEAEDHSHHGHAH.

Residues 29–32, 86–90, Gly413, 476–478, and Asp492 contribute to the ATP site; these read TLGP, DGTTT, and NAA.

This sequence belongs to the chaperonin (HSP60) family. In terms of assembly, forms a cylinder of 14 subunits composed of two heptameric rings stacked back-to-back. Interacts with the co-chaperonin GroES.

Its subcellular location is the cytoplasm. It catalyses the reaction ATP + H2O + a folded polypeptide = ADP + phosphate + an unfolded polypeptide.. Functionally, together with its co-chaperonin GroES, plays an essential role in assisting protein folding. The GroEL-GroES system forms a nano-cage that allows encapsulation of the non-native substrate proteins and provides a physical environment optimized to promote and accelerate protein folding. The sequence is that of Chaperonin GroEL 1 from Nocardia farcinica (strain IFM 10152).